We begin with the raw amino-acid sequence, 135 residues long: Auxin-responsive protein SAUR66 (135 aa).

The protein belongs to the ARG7 family.

Its subcellular location is the cell membrane. Its function is as follows. May promote auxin-stimulated organ elongation, such as hypocotyls, stamen filaments and petals. This chain is Auxin-responsive protein SAUR66, found in Arabidopsis thaliana (Mouse-ear cress).